We begin with the raw amino-acid sequence, 254 residues long: uncharacterized protein (254 aa).

An ABC transporter domain is found at 6-239; it reads LSVDGVEFAY…NIKAVYGVDA (234 aa). 38–45 serves as a coordination point for ATP; that stretch reads GVNGAGKS.

It belongs to the ABC transporter superfamily.

This is an uncharacterized protein from Methanocaldococcus jannaschii (strain ATCC 43067 / DSM 2661 / JAL-1 / JCM 10045 / NBRC 100440) (Methanococcus jannaschii).